A 193-amino-acid polypeptide reads, in one-letter code: Molybdopterin synthase catalytic subunit (193 aa).

Substrate-binding positions include 118–119 (HR), K134, and 141–143 (KKE). The disordered stretch occupies residues 159 to 193 (DRTTTDGTTASSPAPATRPAKGGGCCGSKVRANES). Over residues 163–178 (TDGTTASSPAPATRPA) the composition is skewed to low complexity.

The protein belongs to the MoaE family. MOCS2B subfamily. In terms of assembly, heterotetramer; composed of 2 small (MOCS2A) and 2 large (MOCS2B) subunits.

The protein localises to the cytoplasm. The enzyme catalyses 2 [molybdopterin-synthase sulfur-carrier protein]-C-terminal-Gly-aminoethanethioate + cyclic pyranopterin phosphate + H2O = molybdopterin + 2 [molybdopterin-synthase sulfur-carrier protein]-C-terminal Gly-Gly + 2 H(+). It participates in cofactor biosynthesis; molybdopterin biosynthesis. Functionally, catalytic subunit of the molybdopterin synthase complex, a complex that catalyzes the conversion of precursor Z into molybdopterin. Acts by mediating the incorporation of 2 sulfur atoms from thiocarboxylated MOCS2A into precursor Z to generate a dithiolene group. The polypeptide is Molybdopterin synthase catalytic subunit (Oryza sativa subsp. indica (Rice)).